A 486-amino-acid polypeptide reads, in one-letter code: Cardiolipin synthase A (486 aa).

The next 2 helical transmembrane spans lie at 3–23 (TFYT…IAGV) and 38–58 (MAWL…YLSF). 2 PLD phosphodiesterase domains span residues 219 to 246 (MDLR…VDPR) and 399 to 426 (EGGL…DMRS). Residues H224, K226, D231, H404, K406, and D411 contribute to the active site.

The protein belongs to the phospholipase D family. Cardiolipin synthase subfamily. ClsA sub-subfamily.

It is found in the cell inner membrane. The catalysed reaction is 2 a 1,2-diacyl-sn-glycero-3-phospho-(1'-sn-glycerol) = a cardiolipin + glycerol. Catalyzes the reversible phosphatidyl group transfer from one phosphatidylglycerol molecule to another to form cardiolipin (CL) (diphosphatidylglycerol) and glycerol. The polypeptide is Cardiolipin synthase A (Yersinia pseudotuberculosis serotype O:1b (strain IP 31758)).